A 161-amino-acid polypeptide reads, in one-letter code: 2-C-methyl-D-erythritol 2,4-cyclodiphosphate synthase (161 aa).

Aspartate 10 and histidine 12 together coordinate a divalent metal cation. Residues 10–12 (DVH) and 36–37 (HS) each bind 4-CDP-2-C-methyl-D-erythritol 2-phosphate. Residue histidine 44 participates in a divalent metal cation binding. Residues 58 to 60 (DIG), 63 to 67 (FPDTD), 102 to 108 (AQVPKMA), 134 to 137 (TTTE), phenylalanine 141, and arginine 144 contribute to the 4-CDP-2-C-methyl-D-erythritol 2-phosphate site.

The protein belongs to the IspF family. In terms of assembly, homotrimer. A divalent metal cation serves as cofactor.

It carries out the reaction 4-CDP-2-C-methyl-D-erythritol 2-phosphate = 2-C-methyl-D-erythritol 2,4-cyclic diphosphate + CMP. The protein operates within isoprenoid biosynthesis; isopentenyl diphosphate biosynthesis via DXP pathway; isopentenyl diphosphate from 1-deoxy-D-xylulose 5-phosphate: step 4/6. Involved in the biosynthesis of isopentenyl diphosphate (IPP) and dimethylallyl diphosphate (DMAPP), two major building blocks of isoprenoid compounds. Catalyzes the conversion of 4-diphosphocytidyl-2-C-methyl-D-erythritol 2-phosphate (CDP-ME2P) to 2-C-methyl-D-erythritol 2,4-cyclodiphosphate (ME-CPP) with a corresponding release of cytidine 5-monophosphate (CMP). In Shewanella baltica (strain OS223), this protein is 2-C-methyl-D-erythritol 2,4-cyclodiphosphate synthase.